Here is a 474-residue protein sequence, read N- to C-terminus: MNFETTIGLEVHVELKTNSKIFSPSPVNFGAAPNANTNVIDWGYPGVLPSINKGVVRDGIMAALALHAEVTKKMHFDRKNYFYPDNPKAYQITQSETPIAHDGWVEIEVDGKKKKIGIKEMHIEEDAGKNTHTGSYSYVDLNRQGTPLIEIVSKADIASPEEAVAYLEALRQRIQFTGISDVKMEEGSMRVDTNISVRPYGSDQYGTKTEMKNINSFNFVKNALNFEADRHQKVLMAGGEIVQETRRYDEATKGTVAMRTKEGSDDYRYFPEPDLPPLEVDDAWIEEIRSQMPEMPGERRRRYVNDLGLTDYDAMVLTQTKEMADFFEEAVKDGGDAKKVANYLMNDVNSYLNNQHVDLDDTKLTPANLAGMIKLIDDGTISSKMAKKVFQGILDGQEPAAFAKANGLVQLSDPAELQPIIDAILDDNEQSIEDFKNGKDRAFGFLIGQIMKKTQGKANPKVVNQLLGKSLNER.

This sequence belongs to the GatB/GatE family. GatB subfamily. As to quaternary structure, heterotrimer of A, B and C subunits.

It catalyses the reaction L-glutamyl-tRNA(Gln) + L-glutamine + ATP + H2O = L-glutaminyl-tRNA(Gln) + L-glutamate + ADP + phosphate + H(+). The catalysed reaction is L-aspartyl-tRNA(Asn) + L-glutamine + ATP + H2O = L-asparaginyl-tRNA(Asn) + L-glutamate + ADP + phosphate + 2 H(+). In terms of biological role, allows the formation of correctly charged Asn-tRNA(Asn) or Gln-tRNA(Gln) through the transamidation of misacylated Asp-tRNA(Asn) or Glu-tRNA(Gln) in organisms which lack either or both of asparaginyl-tRNA or glutaminyl-tRNA synthetases. The reaction takes place in the presence of glutamine and ATP through an activated phospho-Asp-tRNA(Asn) or phospho-Glu-tRNA(Gln). This Limosilactobacillus fermentum (strain NBRC 3956 / LMG 18251) (Lactobacillus fermentum) protein is Aspartyl/glutamyl-tRNA(Asn/Gln) amidotransferase subunit B.